A 150-amino-acid polypeptide reads, in one-letter code: Arginine repressor (150 aa).

It belongs to the ArgR family.

The protein resides in the cytoplasm. Its pathway is amino-acid biosynthesis; L-arginine biosynthesis [regulation]. Its function is as follows. Regulates arginine biosynthesis genes. This Thermoanaerobacter sp. (strain X514) protein is Arginine repressor.